We begin with the raw amino-acid sequence, 776 residues long: Protein translocase subunit SecA 2 (776 aa).

Residues Q80, 98-102 (GEGKT), and D486 contribute to the ATP site.

This sequence belongs to the SecA family. As to quaternary structure, monomer and homodimer. Part of the essential Sec protein translocation apparatus which comprises SecA, SecYEG and auxiliary proteins SecDF. Other proteins may also be involved.

The protein resides in the cell membrane. It is found in the cytoplasm. The catalysed reaction is ATP + H2O + cellular proteinSide 1 = ADP + phosphate + cellular proteinSide 2.. Its function is as follows. Part of the Sec protein translocase complex. Interacts with the SecYEG preprotein conducting channel. Has a central role in coupling the hydrolysis of ATP to the transfer of proteins into and across the cell membrane, serving as an ATP-driven molecular motor driving the stepwise translocation of polypeptide chains across the membrane. This chain is Protein translocase subunit SecA 2, found in Listeria monocytogenes serovar 1/2a (strain ATCC BAA-679 / EGD-e).